A 99-amino-acid polypeptide reads, in one-letter code: U1-theraphotoxin-Lsp1a (99 aa).

The first 23 residues, 1–23 (MRSLTLAALLLCSLLLVFHTSAA), serve as a signal peptide directing secretion. Positions 24-50 (AELEAQEGHLMIPGDTDTALETVDDER) are excised as a propeptide. Disulfide bonds link Cys-54/Cys-67, Cys-58/Cys-91, Cys-72/Cys-74, and Cys-85/Cys-96.

It belongs to the neurotoxin 12 (Hwtx-2) family. 04 (lasiotoxin) subfamily. As to expression, expressed by the venom gland.

The protein resides in the secreted. In terms of biological role, toxin that causes irreversible contractile paralysis into adult Aedes aegypti resulting in 100% mortality after 24 hours. The protein is U1-theraphotoxin-Lsp1a of Lasiodora sp. (strain IBSP 8539) (Brazilian salmon pink birdeater).